The primary structure comprises 206 residues: Small ribosomal subunit protein uS7 (206 aa).

It belongs to the universal ribosomal protein uS7 family. Component of the small ribosomal subunit.

It localises to the cytoplasm. Functionally, component of the small ribosomal subunit. The ribosome is a large ribonucleoprotein complex responsible for the synthesis of proteins in the cell. The chain is Small ribosomal subunit protein uS7 from Entamoeba histolytica (strain ATCC 30459 / HM-1:IMSS / ABRM).